The following is a 378-amino-acid chain: Probable S-(hydroxymethyl)glutathione dehydrogenase 1 (378 aa).

Cys47 lines the Zn(2+) pocket. His48 lines the NAD(+) pocket. His69, Glu70, Cys99, Cys102, Cys105, Cys113, and Cys176 together coordinate Zn(2+). NAD(+) contacts are provided by residues 201 to 206, Asp225, 293 to 295, and 318 to 320; these read GCGCVG, IGV, and SAF.

Belongs to the zinc-containing alcohol dehydrogenase family. Class-III subfamily. The cofactor is Zn(2+).

The catalysed reaction is a primary alcohol + NAD(+) = an aldehyde + NADH + H(+). It carries out the reaction a secondary alcohol + NAD(+) = a ketone + NADH + H(+). It catalyses the reaction S-(hydroxymethyl)glutathione + NADP(+) = S-formylglutathione + NADPH + H(+). The enzyme catalyses S-(hydroxymethyl)glutathione + NAD(+) = S-formylglutathione + NADH + H(+). The catalysed reaction is S-nitrosoglutathione + NADH + H(+) = S-(hydroxysulfenamide)glutathione + NAD(+). Functionally, oxidizes long-chain alcohols and, in the presence of glutathione, is able to oxidize formaldehyde. Also acts as a S-nitroso-glutathione reductase by catalyzing the NADH-dependent reduction of S-nitrosoglutathione, thereby regulating protein S-nitrosylation. The sequence is that of Probable S-(hydroxymethyl)glutathione dehydrogenase 1 from Schizosaccharomyces pombe (strain 972 / ATCC 24843) (Fission yeast).